Consider the following 385-residue polypeptide: Glucans biosynthesis protein C (385 aa).

A run of 10 helical transmembrane segments spans residues 17-37 (AWLMLLGIPFHISLIYSSHTW), 60-80 (MQVFFVISGYFSYMLFLRYPL), 91-111 (VGIPMLTAIPLLTLPQFIMLQ), 137-157 (ISHLWFLLVLVVMTTLCVWIF), 173-193 (KFSMVKLSVIFLCLGIGYAVI), 212-232 (FIVMQTLFYLPFFILGALAFI), 239-259 (LFTTPSRGCTLAAALAFVAYL), 274-294 (TESVITMVLGLWMVNVVFSFG), 311-331 (ASLFIYLVHHPLTLFFGAYIT), and 338-358 (WLGFLCGLIFVVGIAIILYEI).

The protein belongs to the acyltransferase 3 family. OpgC subfamily.

Its subcellular location is the cell membrane. Its pathway is glycan metabolism; osmoregulated periplasmic glucan (OPG) biosynthesis. Necessary for the succinyl substitution of periplasmic glucans. Could catalyze the transfer of succinyl residues from the cytoplasmic side of the membrane to the nascent glucan backbones on the periplasmic side of the membrane. The polypeptide is Glucans biosynthesis protein C (Escherichia coli (strain SMS-3-5 / SECEC)).